The primary structure comprises 651 residues: Gag-Pro polyprotein (651 aa).

Residue Gly-2 is the site of N-myristoyl glycine; by host attachment. The tract at residues 93–143 (QIPSHPAPPPPSSPTHDPPDSDPQIPPPYVEPTAPQVLPVMHPHGVPPTHR) is disordered. Ser-105 carries the post-translational modification Phosphoserine; by host MAPK1. Residues 118–121 (PPPY) carry the PPXY motif motif. Positions 124–127 (PTAP) match the PTAP/PSAP motif motif. CCHC-type zinc fingers lie at residues 355 to 372 (QPCF…DCAQ) and 378 to 395 (GPCP…DCPR). The Peptidase A2 domain occupies 476 to 554 (IEALLDTGAD…NNWAIIGRDA (79 aa)). Asp-481 functions as the For protease activity; shared with dimeric partner in the catalytic mechanism. The disordered stretch occupies residues 632-651 (QLKRPMEPGDSSTTCGPLIL). The segment covering 641–651 (DSSTTCGPLIL) has biased composition (polar residues).

Homodimer; the homodimers are part of the immature particles. Interacts with human TSG101 and NEDD4; these interactions are essential for budding and release of viral particles. As to quaternary structure, homodimer; further assembles as homohexamers. In terms of processing, specific enzymatic cleavages by the viral protease yield mature proteins. The polyprotein is cleaved during and after budding, this process is termed maturation. The protease is autoproteolytically processed at its N- and C-termini. Post-translationally, phosphorylation of the matrix protein p19 by MAPK1 seems to play a role in budding. Myristoylated. Myristoylation of the matrix (MA) domain mediates the transport and binding of Gag polyproteins to the host plasma membrane and is required for the assembly of viral particles.

The protein resides in the virion. Functionally, the matrix domain targets Gag, Gag-Pro and Gag-Pro-Pol polyproteins to the plasma membrane via a multipartite membrane binding signal, that includes its myristoylated N-terminus. Its function is as follows. Matrix protein. In terms of biological role, forms the spherical core of the virus that encapsulates the genomic RNA-nucleocapsid complex. Binds strongly to viral nucleic acids and promote their aggregation. Also destabilizes the nucleic acids duplexes via highly structured zinc-binding motifs. Functionally, the aspartyl protease mediates proteolytic cleavages of Gag and Gag-Pol polyproteins during or shortly after the release of the virion from the plasma membrane. Cleavages take place as an ordered, step-wise cascade to yield mature proteins. This process is called maturation. Displays maximal activity during the budding process just prior to particle release from the cell (Potential). Cleaves the translation initiation factor eIF4G leading to the inhibition of host cap-dependent translation. This is Gag-Pro polyprotein (gag-pro) from Human T-cell leukemia virus 1 (isolate Melanesia mel5 subtype C) (HTLV-1).